Here is a 129-residue protein sequence, read N- to C-terminus: Protein Turandot A (129 aa).

The signal sequence occupies residues 1 to 21 (MNSLTGFMCCALLLISPLCMG). N-linked (GlcNAc...) asparagine glycosylation occurs at asparagine 49.

It belongs to the Turandot family.

Its subcellular location is the secreted. A humoral factor that plays a role in stress tolerance; gives increased resistance to the lethal effects of bacterial challenge and stress. Regulated by the JAK/STAT pathway and NF-KB-like Relish pathway in the fat body, upd3 in the hemocytes and Mekk1 in response to septic injury and consequent immune response. This Drosophila yakuba (Fruit fly) protein is Protein Turandot A (TotA).